The following is a 638-amino-acid chain: Sorting nexin-41 (638 aa).

The span at M1–P14 shows a compositional bias: low complexity. Residues M1–P69 are disordered. Residues P15 to R30 show a composition bias toward pro residues. A PX domain is found at G84–W201. 4 residues coordinate a 1,2-diacyl-sn-glycero-3-phospho-(1D-myo-inositol-3-phosphate): R118, S120, K144, and R168. Disordered regions lie at residues K215–P239, L408–A432, and P545–L638. Residues P225–P239 are compositionally biased toward low complexity. A compositionally biased stretch (basic and acidic residues) spans E423–A432. Residues Q552–S562 are compositionally biased toward low complexity. A compositionally biased stretch (basic and acidic residues) spans M585–L601.

The protein belongs to the sorting nexin family.

The protein localises to the endosome membrane. The protein resides in the endomembrane system. Functionally, may be required for cytoplasm to vacuole transport (Cvt) and pexophagy. The sequence is that of Sorting nexin-41 (SNX41) from Cryptococcus neoformans var. neoformans serotype D (strain B-3501A) (Filobasidiella neoformans).